The following is a 131-amino-acid chain: Small ribosomal subunit protein uS8 (131 aa).

The protein belongs to the universal ribosomal protein uS8 family. As to quaternary structure, part of the 30S ribosomal subunit. Contacts proteins S5 and S12.

Its function is as follows. One of the primary rRNA binding proteins, it binds directly to 16S rRNA central domain where it helps coordinate assembly of the platform of the 30S subunit. The sequence is that of Small ribosomal subunit protein uS8 from Dechloromonas aromatica (strain RCB).